Here is a 307-residue protein sequence, read N- to C-terminus: Membrane protein insertase YidC 2 (307 aa).

An N-terminal signal peptide occupies residues 1-23 (MKLTLNRILFSGLALSILFTLTG). Cysteine 24 carries N-palmitoyl cysteine lipidation. The S-diacylglycerol cysteine moiety is linked to residue cysteine 24. The next 5 helical transmembrane spans lie at 58–78 (LGYG…ILPL), 135–155 (LGGI…AMYF), 179–199 (VLTA…MMAV), 209–225 (TMMY…SFSL), and 231–251 (LYWL…TYLL). The segment at 263 to 307 (YAKNPPKAYQSTSSRKDVTPSQNMEQANLPKKIKSNRNAGKQRKR) is disordered. Over residues 271–288 (YQSTSSRKDVTPSQNMEQ) the composition is skewed to polar residues. Residues 293–307 (KKIKSNRNAGKQRKR) show a composition bias toward basic residues.

It belongs to the OXA1/ALB3/YidC family. Type 2 subfamily.

It localises to the cell membrane. Required for the insertion and/or proper folding and/or complex formation of integral membrane proteins into the membrane. Involved in integration of membrane proteins that insert both dependently and independently of the Sec translocase complex, as well as at least some lipoproteins. This is Membrane protein insertase YidC 2 from Streptococcus pyogenes serotype M3 (strain ATCC BAA-595 / MGAS315).